We begin with the raw amino-acid sequence, 453 residues long: MFARVFKAMPARAPAFTSVNASIQSRFMATVRQGRPATERATFTIRDGPIFHGKSFGARSNISGEAVFTTSLVGYPESLTDPSYRGQILVFTQPLIGNYGVPSAERDQHGLLKYFESPNLQAAGVVVADVAEQYSHWTAVESLGEWCAREGVPAISGVDTRAIVTYLREQGSSLARITVGEEYDADQDEAFVDPEQIHLVRQVSTKAPFHVSAADPQCHVAVIDCGVKENILRSLVSRGASITVFPFDYPIHKVAHHFDGVFISNGPGDPTHCQDTVYHLRRLMETSQVPIFGICLGHQLLALANGARTIKLKYGNRAHNIPALDTTTGRCHITSQNHGYAVDASTLPSDWKPYFVNLNDSSNEGMIHKTRPIFSTQFHPEAKGGPLDSSYLFDIYLDSVVKYKNHQLAFHPNRNTVPSPLLVDLLAKERVGVQPTIGMQNVAAAAAAAVAAA.

Residues 1 to 28 constitute a mitochondrion transit peptide; it reads MFARVFKAMPARAPAFTSVNASIQSRFM. Positions 219–406 constitute a Glutamine amidotransferase type-1 domain; that stretch reads HVAVIDCGVK…LDSVVKYKNH (188 aa). Catalysis depends on C295, which acts as the Nucleophile. Catalysis depends on residues H379 and E381.

The protein belongs to the CarA family. Heterodimer composed of 2 chains; the small (or glutamine) chain promotes the hydrolysis of glutamine to ammonia, which is used by the large (or ammonia) chain to synthesize carbamoyl phosphate.

It localises to the mitochondrion matrix. It carries out the reaction hydrogencarbonate + L-glutamine + 2 ATP + H2O = carbamoyl phosphate + L-glutamate + 2 ADP + phosphate + 2 H(+). The catalysed reaction is L-glutamine + H2O = L-glutamate + NH4(+). It functions in the pathway amino-acid biosynthesis; L-arginine biosynthesis; carbamoyl phosphate from bicarbonate: step 1/1. Small subunit of the arginine-specific carbamoyl phosphate synthase (CPSase). CPSase catalyzes the formation of carbamoyl phosphate from the ammonia moiety of glutamine, carbonate, and phosphate donated by ATP, the first step of the arginine biosynthetic pathway. The small subunit (glutamine amidotransferase) binds and cleaves glutamine to supply the large subunit with the substrate ammonia. In Aspergillus niger (strain ATCC MYA-4892 / CBS 513.88 / FGSC A1513), this protein is Carbamoyl phosphate synthase arginine-specific small chain (cpa1).